Here is a 168-residue protein sequence, read N- to C-terminus: Cell division inhibitor SulA (168 aa).

A disordered region spans residues 1 to 20 (MSTQSVSSHNIESSSFSANQ). Residues 105–111 (ALLTGNY) are ftsZ binding. Residues 161–168 (KIHSTLYH) form a lon protease binding region.

It belongs to the SulA family. In terms of assembly, interacts with FtsZ. Post-translationally, is rapidly cleaved and degraded by the Lon protease once DNA damage is repaired.

Its function is as follows. Component of the SOS system and an inhibitor of cell division. Accumulation of SulA causes rapid cessation of cell division and the appearance of long, non-septate filaments. In the presence of GTP, binds a polymerization-competent form of FtsZ in a 1:1 ratio, thus inhibiting FtsZ polymerization and therefore preventing it from participating in the assembly of the Z ring. This mechanism prevents the premature segregation of damaged DNA to daughter cells during cell division. This is Cell division inhibitor SulA from Pectobacterium atrosepticum (strain SCRI 1043 / ATCC BAA-672) (Erwinia carotovora subsp. atroseptica).